The sequence spans 293 residues: Zinc metalloproteinase nas-2 (293 aa).

An N-terminal signal peptide occupies residues M1–P17. The propeptide occupies K18 to R67. One can recognise a Peptidase M12A domain in the interval R67–K260. N111 carries an N-linked (GlcNAc...) asparagine glycan. 2 cysteine pairs are disulfide-bonded: C114–C259 and C139–C169. Position 180 (H180) interacts with Zn(2+). The active site involves E181. The Zn(2+) site is built by H184 and H190. Residue N287 is glycosylated (N-linked (GlcNAc...) asparagine).

The cofactor is Zn(2+).

Its subcellular location is the secreted. In terms of biological role, metalloprotease. In Caenorhabditis elegans, this protein is Zinc metalloproteinase nas-2 (nas-2).